A 217-amino-acid polypeptide reads, in one-letter code: Small ribosomal subunit protein uS3c (217 aa).

In terms of domain architecture, KH type-2 spans 46-117 (VQKHIKNSSN…RLRMTLIEIA (72 aa)).

The protein belongs to the universal ribosomal protein uS3 family. In terms of assembly, part of the 30S ribosomal subunit.

The protein resides in the plastid. It localises to the chloroplast. The chain is Small ribosomal subunit protein uS3c (rps3) from Marchantia polymorpha (Common liverwort).